The chain runs to 368 residues: Chaperone protein DnaJ (368 aa).

The region spanning 5-70 (DYYQVLGVPR…KKRKLYDTHG (66 aa)) is the J domain. The CR-type zinc finger occupies 124 to 201 (GVERQIQIPT…CNGAGRVEDH (78 aa)). 8 residues coordinate Zn(2+): Cys-137, Cys-140, Cys-153, Cys-156, Cys-175, Cys-178, Cys-189, and Cys-192. CXXCXGXG motif repeat units follow at residues 137 to 144 (CTHCHGSG), 153 to 160 (CGTCRGSG), 175 to 182 (CPHCGGRG), and 189 to 196 (CKVCNGAG).

This sequence belongs to the DnaJ family. As to quaternary structure, homodimer. The cofactor is Zn(2+).

Its subcellular location is the cytoplasm. Participates actively in the response to hyperosmotic and heat shock by preventing the aggregation of stress-denatured proteins and by disaggregating proteins, also in an autonomous, DnaK-independent fashion. Unfolded proteins bind initially to DnaJ; upon interaction with the DnaJ-bound protein, DnaK hydrolyzes its bound ATP, resulting in the formation of a stable complex. GrpE releases ADP from DnaK; ATP binding to DnaK triggers the release of the substrate protein, thus completing the reaction cycle. Several rounds of ATP-dependent interactions between DnaJ, DnaK and GrpE are required for fully efficient folding. Also involved, together with DnaK and GrpE, in the DNA replication of plasmids through activation of initiation proteins. The polypeptide is Chaperone protein DnaJ (Xylella fastidiosa (strain 9a5c)).